The chain runs to 130 residues: Small ribosomal subunit protein uS11c (130 aa).

The protein belongs to the universal ribosomal protein uS11 family. Part of the 30S ribosomal subunit.

The protein resides in the plastid. It is found in the chloroplast. This chain is Small ribosomal subunit protein uS11c, found in Drimys granadensis.